The following is a 478-amino-acid chain: tRNA-2-methylthio-N(6)-dimethylallyladenosine synthase (478 aa).

One can recognise an MTTase N-terminal domain in the interval 39-157 (KLVFTQTFGC…FPQLLTESIN (119 aa)). [4Fe-4S] cluster-binding residues include Cys-48, Cys-84, Cys-118, Cys-194, Cys-198, and Cys-201. The 231-residue stretch at 180-410 (RKFELKAFVN…LEAVNRISAE (231 aa)) folds into the Radical SAM core domain. The region spanning 410 to 477 (EINDGYKDRI…TFSLNGILVN (68 aa)) is the TRAM domain.

This sequence belongs to the methylthiotransferase family. MiaB subfamily. Monomer. It depends on [4Fe-4S] cluster as a cofactor.

Its subcellular location is the cytoplasm. It catalyses the reaction N(6)-dimethylallyladenosine(37) in tRNA + (sulfur carrier)-SH + AH2 + 2 S-adenosyl-L-methionine = 2-methylsulfanyl-N(6)-dimethylallyladenosine(37) in tRNA + (sulfur carrier)-H + 5'-deoxyadenosine + L-methionine + A + S-adenosyl-L-homocysteine + 2 H(+). In terms of biological role, catalyzes the methylthiolation of N6-(dimethylallyl)adenosine (i(6)A), leading to the formation of 2-methylthio-N6-(dimethylallyl)adenosine (ms(2)i(6)A) at position 37 in tRNAs that read codons beginning with uridine. This chain is tRNA-2-methylthio-N(6)-dimethylallyladenosine synthase, found in Clostridioides difficile (strain 630) (Peptoclostridium difficile).